Reading from the N-terminus, the 223-residue chain is Deoxyribose-phosphate aldolase (223 aa).

Catalysis depends on D92, which acts as the Proton donor/acceptor. K154 acts as the Schiff-base intermediate with acetaldehyde in catalysis. K182 serves as the catalytic Proton donor/acceptor.

The protein belongs to the DeoC/FbaB aldolase family. DeoC type 1 subfamily.

It localises to the cytoplasm. It carries out the reaction 2-deoxy-D-ribose 5-phosphate = D-glyceraldehyde 3-phosphate + acetaldehyde. Its pathway is carbohydrate degradation; 2-deoxy-D-ribose 1-phosphate degradation; D-glyceraldehyde 3-phosphate and acetaldehyde from 2-deoxy-alpha-D-ribose 1-phosphate: step 2/2. Functionally, catalyzes a reversible aldol reaction between acetaldehyde and D-glyceraldehyde 3-phosphate to generate 2-deoxy-D-ribose 5-phosphate. The protein is Deoxyribose-phosphate aldolase of Haemophilus influenzae (strain 86-028NP).